The sequence spans 243 residues: Glutathione S-transferase omega-2 (243 aa).

Positions 22 to 101 (GLIRIYSMRF…YLDDAYPGRK (80 aa)) constitute a GST N-terminal domain. Catalysis depends on Cys-32, which acts as the Nucleophile. Glutathione contacts are provided by residues Lys-59, Ile-72, and 85–86 (ES). The GST C-terminal domain occupies 106–231 (DPYERARQKM…IFQGFLNLYF (126 aa)).

It belongs to the GST superfamily. Omega family. As to expression, expressed in a range of tissues, including the liver, kidney, skeletal muscle and prostate. Strongest expression in the testis.

It catalyses the reaction RX + glutathione = an S-substituted glutathione + a halide anion + H(+). It carries out the reaction L-dehydroascorbate + 2 glutathione = glutathione disulfide + L-ascorbate. The catalysed reaction is methylarsonate + 2 glutathione + H(+) = methylarsonous acid + glutathione disulfide + H2O. Functionally, exhibits glutathione-dependent thiol transferase activity. Has high dehydroascorbate reductase activity and may contribute to the recycling of ascorbic acid. Participates in the biotransformation of inorganic arsenic and reduces monomethylarsonic acid (MMA). The sequence is that of Glutathione S-transferase omega-2 (GSTO2) from Homo sapiens (Human).